A 968-amino-acid polypeptide reads, in one-letter code: Phosphoenolpyruvate carboxylase 3 (968 aa).

Serine 11 carries the phosphoserine modification. Residues histidine 173 and lysine 603 contribute to the active site. At serine 705 the chain carries Phosphoserine.

Belongs to the PEPCase type 1 family. In terms of assembly, homotetramer. Mg(2+) is required as a cofactor. As to expression, expressed in roots and siliques, and to a lower extent in stems, leaves and flowers.

It localises to the cytoplasm. It catalyses the reaction oxaloacetate + phosphate = phosphoenolpyruvate + hydrogencarbonate. Its activity is regulated as follows. By light-reversible phosphorylation. Functionally, through the carboxylation of phosphoenolpyruvate (PEP) it forms oxaloacetate, a four-carbon dicarboxylic acid source for the tricarboxylic acid cycle. The chain is Phosphoenolpyruvate carboxylase 3 (PPC3) from Arabidopsis thaliana (Mouse-ear cress).